The primary structure comprises 154 residues: 6,7-dimethyl-8-ribityllumazine synthase (154 aa).

Residues 22-23, 56-58, and 80-82 contribute to the 5-amino-6-(D-ribitylamino)uracil site; these read FN, SWE, and VLI. (2S)-2-hydroxy-3-oxobutyl phosphate is bound at residue 85-86; the sequence is AT. His88 serves as the catalytic Proton donor. 5-amino-6-(D-ribitylamino)uracil is bound at residue Phe113. Arg127 provides a ligand contact to (2S)-2-hydroxy-3-oxobutyl phosphate. 5-amino-6-(D-ribitylamino)uracil is bound at residue Lys135.

It belongs to the DMRL synthase family. As to quaternary structure, forms an icosahedral capsid composed of 60 subunits, arranged as a dodecamer of pentamers.

The enzyme catalyses (2S)-2-hydroxy-3-oxobutyl phosphate + 5-amino-6-(D-ribitylamino)uracil = 6,7-dimethyl-8-(1-D-ribityl)lumazine + phosphate + 2 H2O + H(+). It participates in cofactor biosynthesis; riboflavin biosynthesis; riboflavin from 2-hydroxy-3-oxobutyl phosphate and 5-amino-6-(D-ribitylamino)uracil: step 1/2. In terms of biological role, catalyzes the formation of 6,7-dimethyl-8-ribityllumazine by condensation of 5-amino-6-(D-ribitylamino)uracil with 3,4-dihydroxy-2-butanone 4-phosphate. This is the penultimate step in the biosynthesis of riboflavin. The chain is 6,7-dimethyl-8-ribityllumazine synthase (ribH) from Aquifex aeolicus (strain VF5).